The following is an 82-amino-acid chain: Conotoxin C11GB (82 aa).

An N-terminal signal peptide occupies residues 1–22 (MKLTCVMIVAVLFLTAWTVVTA). Positions 23 to 53 (EPHSSNVLENLYLKAHHEMENPEASKLNTRD) are excised as a propeptide. 3 cysteine pairs are disulfide-bonded: cysteine 55/cysteine 72, cysteine 62/cysteine 76, and cysteine 71/cysteine 80.

The protein belongs to the conotoxin O1 superfamily. Expressed by the venom duct.

It localises to the secreted. This Conus vexillum (Flag cone) protein is Conotoxin C11GB.